The chain runs to 178 residues: Ribosomal RNA small subunit methyltransferase G (178 aa).

S-adenosyl-L-methionine contacts are provided by residues Gly54, Leu59, 105–106 (LE), and Arg120.

Belongs to the methyltransferase superfamily. RNA methyltransferase RsmG family.

It is found in the cytoplasm. It catalyses the reaction guanosine(527) in 16S rRNA + S-adenosyl-L-methionine = N(7)-methylguanosine(527) in 16S rRNA + S-adenosyl-L-homocysteine. Specifically methylates the N7 position of guanine in position 527 of 16S rRNA. The chain is Ribosomal RNA small subunit methyltransferase G from Helicobacter pylori (strain ATCC 700392 / 26695) (Campylobacter pylori).